Reading from the N-terminus, the 190-residue chain is Putative manganese efflux pump MntP (190 aa).

The next 6 membrane-spanning stretches (helical) occupy residues 3–23, 41–61, 62–82, 105–127, 143–163, and 168–188; these read MSAT…ASIG, LIFG…GFFA, SQYI…ILGG, LALL…VGLA, ATMI…PILG, and VMGG…HLGY.

This sequence belongs to the MntP (TC 9.B.29) family.

It is found in the cell inner membrane. In terms of biological role, probably functions as a manganese efflux pump. In Pectobacterium carotovorum subsp. carotovorum (strain PC1), this protein is Putative manganese efflux pump MntP.